Consider the following 877-residue polypeptide: DNA mismatch repair protein MutS (877 aa).

Glycine 630–serine 637 is an ATP binding site.

Belongs to the DNA mismatch repair MutS family.

Its function is as follows. This protein is involved in the repair of mismatches in DNA. It is possible that it carries out the mismatch recognition step. This protein has a weak ATPase activity. The protein is DNA mismatch repair protein MutS of Ruegeria pomeroyi (strain ATCC 700808 / DSM 15171 / DSS-3) (Silicibacter pomeroyi).